Consider the following 205-residue polypeptide: Leucyl/phenylalanyl-tRNA--protein transferase (205 aa).

This sequence belongs to the L/F-transferase family.

It is found in the cytoplasm. It catalyses the reaction N-terminal L-lysyl-[protein] + L-leucyl-tRNA(Leu) = N-terminal L-leucyl-L-lysyl-[protein] + tRNA(Leu) + H(+). The catalysed reaction is N-terminal L-arginyl-[protein] + L-leucyl-tRNA(Leu) = N-terminal L-leucyl-L-arginyl-[protein] + tRNA(Leu) + H(+). The enzyme catalyses L-phenylalanyl-tRNA(Phe) + an N-terminal L-alpha-aminoacyl-[protein] = an N-terminal L-phenylalanyl-L-alpha-aminoacyl-[protein] + tRNA(Phe). Functions in the N-end rule pathway of protein degradation where it conjugates Leu, Phe and, less efficiently, Met from aminoacyl-tRNAs to the N-termini of proteins containing an N-terminal arginine or lysine. This is Leucyl/phenylalanyl-tRNA--protein transferase from Mesorhizobium japonicum (strain LMG 29417 / CECT 9101 / MAFF 303099) (Mesorhizobium loti (strain MAFF 303099)).